A 442-amino-acid chain; its full sequence is tRNA modification GTPase MnmE (442 aa).

The (6S)-5-formyl-5,6,7,8-tetrahydrofolate site is built by R27, E84, and K124. Residues 221-366 enclose the TrmE-type G domain; the sequence is GLHVVIVGAP…LLTNLQNFAE (146 aa). GTP contacts are provided by residues 231 to 236, 250 to 256, and 275 to 278; these read NAGKSS, SEEAGTT, and DTAG. Positions 235 and 256 each coordinate Mg(2+). K442 is a (6S)-5-formyl-5,6,7,8-tetrahydrofolate binding site.

It belongs to the TRAFAC class TrmE-Era-EngA-EngB-Septin-like GTPase superfamily. TrmE GTPase family. Homodimer. Heterotetramer of two MnmE and two MnmG subunits. The cofactor is K(+).

Its subcellular location is the cytoplasm. In terms of biological role, exhibits a very high intrinsic GTPase hydrolysis rate. Involved in the addition of a carboxymethylaminomethyl (cmnm) group at the wobble position (U34) of certain tRNAs, forming tRNA-cmnm(5)s(2)U34. In Brucella anthropi (strain ATCC 49188 / DSM 6882 / CCUG 24695 / JCM 21032 / LMG 3331 / NBRC 15819 / NCTC 12168 / Alc 37) (Ochrobactrum anthropi), this protein is tRNA modification GTPase MnmE.